The sequence spans 475 residues: MKWEVVIGIEVHVQLNTASKIFSGASTAFGAEPNTQASAVELALPGVLPVLNRAVVDKAIRLGLALDANINQKNVFARKNYFYPDLPKGYQISQMDLPIVEHGKLKILVGDQEKVIGVTRAHMEEDAGKSLHEDFQGLSGIDLNRAGTPLLEVVSEPDMRSVDEALAYVKALYTLVTWLGICDGNMQEGSFRMDVNVSVRPEGQKEFGTRREIKNLNSFRFLEQAAKYEIQWQIDTLEDGGKVQQATVLFDPDTGETRMMRSKEDAHDYRYFPDPDLLPVRISDEQVARIKGEMPELPGAMQARFVDAYGVSAYDAALLTSSLAQAQYFEAVAKASGQGKLAANWINGEIAARLNRDGKDILDCPISAERLSGLIARIADNTLSSKLAKQVFDALWDSELSADAIIERDGLKQVSDVGAIEKMVEEAIAANPKAVEEFRAGKEKALNALAGQVMKASKGKANPAQVQDILRQKLS.

This sequence belongs to the GatB/GatE family. GatB subfamily. In terms of assembly, heterotrimer of A, B and C subunits.

It carries out the reaction L-glutamyl-tRNA(Gln) + L-glutamine + ATP + H2O = L-glutaminyl-tRNA(Gln) + L-glutamate + ADP + phosphate + H(+). It catalyses the reaction L-aspartyl-tRNA(Asn) + L-glutamine + ATP + H2O = L-asparaginyl-tRNA(Asn) + L-glutamate + ADP + phosphate + 2 H(+). Its function is as follows. Allows the formation of correctly charged Asn-tRNA(Asn) or Gln-tRNA(Gln) through the transamidation of misacylated Asp-tRNA(Asn) or Glu-tRNA(Gln) in organisms which lack either or both of asparaginyl-tRNA or glutaminyl-tRNA synthetases. The reaction takes place in the presence of glutamine and ATP through an activated phospho-Asp-tRNA(Asn) or phospho-Glu-tRNA(Gln). The chain is Aspartyl/glutamyl-tRNA(Asn/Gln) amidotransferase subunit B from Chromobacterium violaceum (strain ATCC 12472 / DSM 30191 / JCM 1249 / CCUG 213 / NBRC 12614 / NCIMB 9131 / NCTC 9757 / MK).